A 207-amino-acid polypeptide reads, in one-letter code: Galactoside O-acetyltransferase (207 aa).

Asn-87 serves as a coordination point for acetyl-CoA. The active-site Proton donor/acceptor is the His-117. Residues Ala-144, Ala-162, 167 to 168 (TK), and Arg-185 contribute to the acetyl-CoA site.

This sequence belongs to the transferase hexapeptide repeat family. In terms of assembly, homotrimer.

It is found in the cytoplasm. The enzyme catalyses a beta-D-galactoside + acetyl-CoA = a 6-acetyl-beta-D-galactoside + CoA. The polypeptide is Galactoside O-acetyltransferase (lacA) (Lactococcus lactis subsp. lactis (strain IL1403) (Streptococcus lactis)).